A 396-amino-acid polypeptide reads, in one-letter code: L-lactate dehydrogenase (396 aa).

One can recognise an FMN hydroxy acid dehydrogenase domain in the interval 1 to 380 (MIISAASDYR…TQDSLVQGLG (380 aa)). Tyr24 serves as a coordination point for substrate. The FMN site is built by Ser106 and Gln127. Tyr129 is a substrate binding site. Thr155 is an FMN binding site. Substrate is bound at residue Arg164. Position 251 (Lys251) interacts with FMN. His275 (proton acceptor) is an active-site residue. Residue Arg278 participates in substrate binding. 306-330 (DSGIRNGLDVVRMIALGADTVLLGR) contacts FMN.

The protein belongs to the FMN-dependent alpha-hydroxy acid dehydrogenase family. FMN serves as cofactor.

The protein localises to the cell inner membrane. The catalysed reaction is (S)-lactate + A = pyruvate + AH2. Functionally, catalyzes the conversion of L-lactate to pyruvate. Is coupled to the respiratory chain. In Escherichia coli O7:K1 (strain IAI39 / ExPEC), this protein is L-lactate dehydrogenase.